The following is a 549-amino-acid chain: Probable protein kinase UbiB (549 aa).

The Protein kinase domain occupies 123-501; that stretch reads DFDNTPLASA…QQKAHKSNYL (379 aa). ATP-binding positions include 129–137 and lysine 152; that span reads LASASISQV. Aspartate 287 (proton acceptor) is an active-site residue. Helical transmembrane passes span 498–518 and 520–540; these read SNYLLITSAVLVICGTILFNQ and ATLWASYGSITVGVVLWLLGW.

The protein belongs to the ABC1 family. UbiB subfamily.

The protein localises to the cell inner membrane. Its pathway is cofactor biosynthesis; ubiquinone biosynthesis [regulation]. In terms of biological role, is probably a protein kinase regulator of UbiI activity which is involved in aerobic coenzyme Q (ubiquinone) biosynthesis. The polypeptide is Probable protein kinase UbiB (Shewanella woodyi (strain ATCC 51908 / MS32)).